A 188-amino-acid chain; its full sequence is Trafficking protein particle complex subunit 5 (188 aa).

Ser10 carries the post-translational modification Phosphoserine.

The protein belongs to the TRAPP small subunits family. BET3 subfamily. As to quaternary structure, component of the multisubunit TRAPP (transport protein particle) complex, which includes at least TRAPPC2, TRAPPC2L, TRAPPC3, TRAPPC3L, TRAPPC4, TRAPPC5, TRAPPC8, TRAPPC9, TRAPPC10, TRAPPC11 and TRAPPC12.

It localises to the golgi apparatus. Its subcellular location is the cis-Golgi network. The protein resides in the endoplasmic reticulum. May play a role in vesicular transport from endoplasmic reticulum to Golgi. This chain is Trafficking protein particle complex subunit 5 (Trappc5), found in Mus musculus (Mouse).